The chain runs to 237 residues: Uridylate kinase (237 aa).

Residue 10–13 coordinates ATP; the sequence is KLSG. Residue G51 coordinates UMP. ATP is bound by residues G52 and R56. UMP contacts are provided by residues D71 and 133-140; that span reads TGNPCFTT. Residues T160, Y166, and D169 each coordinate ATP.

The protein belongs to the UMP kinase family. Homohexamer.

It is found in the cytoplasm. It catalyses the reaction UMP + ATP = UDP + ADP. Its pathway is pyrimidine metabolism; CTP biosynthesis via de novo pathway; UDP from UMP (UMPK route): step 1/1. Inhibited by UTP. In terms of biological role, catalyzes the reversible phosphorylation of UMP to UDP. This chain is Uridylate kinase, found in Vesicomyosocius okutanii subsp. Calyptogena okutanii (strain HA).